Reading from the N-terminus, the 686-residue chain is Probable metal-nicotianamine transporter YSL4 (686 aa).

The next 14 membrane-spanning stretches (helical) occupy residues 27 to 47 (WLVT…FCFV), 53 to 73 (MMTG…FFLL), 96 to 116 (MFLI…GFAT), 151 to 171 (FFLI…IMII), 203 to 223 (VMTI…QWFY), 264 to 284 (IVNF…YPYL), 308 to 328 (VFIS…ILVT), 373 to 393 (IPMF…MVAM), 405 to 425 (VGVL…ATGL), 441 to 461 (IFAA…VSGI), 488 to 508 (AMIA…PCIF), 554 to 574 (CVEL…LVLV), 596 to 616 (FFAG…LLLW), and 629 to 649 (AAVA…SALL).

Belongs to the YSL (TC 2.A.67.2) family.

The protein localises to the membrane. Functionally, may be involved in the transport of nicotianamine-chelated metals. The chain is Probable metal-nicotianamine transporter YSL4 (YSL4) from Oryza sativa subsp. japonica (Rice).